Here is a 319-residue protein sequence, read N- to C-terminus: 2-oxoglutarate and iron-dependent oxygenase domain-containing protein 3 (319 aa).

Positions 1–34 are disordered; the sequence is MAPQRRAATKAPEGNGAAERRNRSSTKKDRAPRE. At 1–42 the chain is on the cytoplasmic side; that stretch reads MAPQRRAATKAPEGNGAAERRNRSSTKKDRAPREVQRLWQRP. The span at 18–34 shows a compositional bias: basic and acidic residues; sequence AERRNRSSTKKDRAPRE. The helical; Signal-anchor for type II membrane protein transmembrane segment at 43–65 threads the bilayer; that stretch reads WLRTAGLGAGFVLTALLLWSSLG. The Lumenal portion of the chain corresponds to 66-319; that stretch reads ADDGVAEVLA…DHGIEDPAFP (254 aa). The 103-residue stretch at 207 to 309 folds into the Fe2OG dioxygenase domain; it reads KPTFFSRINS…AITIAFSCNP (103 aa). N215 carries N-linked (GlcNAc...) asparagine glycosylation. Positions 230, 232, and 288 each coordinate Fe cation. R298 is an active-site residue. R298 serves as a coordination point for 2-oxoglutarate.

It belongs to the OGFOD3 family. The cofactor is Fe(2+). L-ascorbate is required as a cofactor.

The protein localises to the membrane. The polypeptide is 2-oxoglutarate and iron-dependent oxygenase domain-containing protein 3 (OGFOD3) (Homo sapiens (Human)).